Here is a 174-residue protein sequence, read N- to C-terminus: Large ribosomal subunit protein uL10 (174 aa).

The protein belongs to the universal ribosomal protein uL10 family. In terms of assembly, part of the ribosomal stalk of the 50S ribosomal subunit. The N-terminus interacts with L11 and the large rRNA to form the base of the stalk. The C-terminus forms an elongated spine to which L12 dimers bind in a sequential fashion forming a multimeric L10(L12)X complex.

Forms part of the ribosomal stalk, playing a central role in the interaction of the ribosome with GTP-bound translation factors. The polypeptide is Large ribosomal subunit protein uL10 (Verminephrobacter eiseniae (strain EF01-2)).